The sequence spans 954 residues: Kinesin-like protein KIN-7A (954 aa).

The segment at M1–R29 is disordered. Low complexity predominate over residues T17–T28. A Kinesin motor domain is found at K34 to V354. Position 119-126 (G119–T126) interacts with ATP. Coiled-coil stretches lie at residues V363–Q436 and L480–S588. Disordered stretches follow at residues P624–N689 and G741–D762. The span at P630 to P639 shows a compositional bias: low complexity. 2 stretches are compositionally biased toward basic and acidic residues: residues L640 to E660 and K666 to R681.

Belongs to the TRAFAC class myosin-kinesin ATPase superfamily. Kinesin family. KIN-7 subfamily. Ubiquitous with a preferential expression in the shoot apical meristem (SAM).

In terms of biological role, may be essential to promote the progression of cytokinesis during node-internode differentiation. The polypeptide is Kinesin-like protein KIN-7A (Oryza sativa subsp. japonica (Rice)).